The primary structure comprises 364 residues: Ribosomal RNA large subunit methyltransferase M (364 aa).

S-adenosyl-L-methionine is bound by residues Ser-198, 231-234 (APGG), Asp-250, Asp-270, and Asp-286. Catalysis depends on Lys-315, which acts as the Proton acceptor.

This sequence belongs to the class I-like SAM-binding methyltransferase superfamily. RNA methyltransferase RlmE family. RlmM subfamily. In terms of assembly, monomer.

It localises to the cytoplasm. It catalyses the reaction cytidine(2498) in 23S rRNA + S-adenosyl-L-methionine = 2'-O-methylcytidine(2498) in 23S rRNA + S-adenosyl-L-homocysteine + H(+). Functionally, catalyzes the 2'-O-methylation at nucleotide C2498 in 23S rRNA. This Thauera aminoaromatica protein is Ribosomal RNA large subunit methyltransferase M.